Reading from the N-terminus, the 449-residue chain is L-lysine-epsilon aminotransferase (449 aa).

Pyridoxal 5'-phosphate is bound by residues Gly128 and Ala129. Residues Arg170 and Gln274 each coordinate 2-oxoglutarate. Position 170 (Arg170) interacts with L-lysine. Gln274 serves as a coordination point for pyridoxal 5'-phosphate. Lys300 is subject to N6-(pyridoxal phosphate)lysine. Residue Arg422 coordinates 2-oxoglutarate.

It belongs to the class-III pyridoxal-phosphate-dependent aminotransferase family. Requires pyridoxal 5'-phosphate as cofactor.

It carries out the reaction L-lysine + 2-oxoglutarate = (S)-2-amino-6-oxohexanoate + L-glutamate. Catalyzes the transfer of the terminal amino group of L-lysine to alpha-ketoglutarate to yield L-glutamate and 2-aminoadipate 6-semialdehyde ((S)-2-amino-6-oxohexanoate), which is spontaneously converted to the dehydrated form 1-piperideine 6-carboxylate. In Mycobacterium bovis (strain ATCC BAA-935 / AF2122/97), this protein is L-lysine-epsilon aminotransferase.